The primary structure comprises 856 residues: MSGRDNRGAGGGGGGHQPLSNAMGKLKEKLTRVGDELGYHRVESNLSTSNTATSLDTILPEDPFLFPQVSPQRHPQTVRTQRLLEDEPPLSFRPLLEDDDINEPPTQQQKRTPLRASGSLELTPLPPPPTSLEIREHRDRQQRGAQGDELQRSKQSLKGSRVSFERRDTGNSNTNSNKAAESSDEDSFEEKRTGFQQQKATSVDHKGILKDLKHILANDNRRQFQAKKHVSLDVKGTRFLQDLLKESSSEEEFHKTRREFQGRKHQSLDPRVTFKLDKVLQGSSTDSDEEGEDAEHKRLIHRPKDITKPVIIDLKDLESESDEDFLTSRQHFQQQRSISTDSRKSRRLYEMDEMGNKRGENIRHAVPFVRQITEDGKPKLEVYRPTTNPIFIWTQVIAALSVSLGSLVVGFVSAYTSPALVSMSDPNITSFTVTKDAGSWVGGIMPLAGLVGGVAGGPLIEYMGRRNTILATAVPFIVSSLLIACAVNVAMVLCGRFLAGFCVGIASLSLPVYLGETVQPEVRGTLGLLPTAFGNIGILVCFVAGSFMNWSMLAFLGAALPVPFLILMFLIPETPRWYVSRGREERARKALTWLRGKEADVEPELKGLMRSQADADRQATQNTMLELLKRNNLKPLSISLGLMFFQQFSGINAVIFYTVQIFKDAGSTIDGNVCTIIVGVVNFVATFIGILLIDRAGRKILLYASDIAMVLTLFVLGGFFYCKAHGPDVSHLGWLPLTCFVVYILGFSVGFGPIPWLMMGEILPAKIRGAAASVATSFNWTCTFVVTKTFQDLVGSLGAHGAFWLFGAICFVGLFFVILYVPETQGKTLEDIERKMMGRVRRMSSVANIKPLSFNM.

Disordered stretches follow at residues 1–29 and 62–202; these read MSGR…LKEK and DPFL…KATS. Over 1–389 the chain is Cytoplasmic; sequence MSGRDNRGAG…LEVYRPTTNP (389 aa). Over residues 69 to 80 the composition is skewed to polar residues; it reads VSPQRHPQTVRT. Positions 133–142 are enriched in basic and acidic residues; that stretch reads EIREHRDRQQ. The span at 170–180 shows a compositional bias: polar residues; the sequence is GNSNTNSNKAA. 5 positions are modified to phosphoserine: Ser-247, Ser-248, Ser-249, Ser-319, and Ser-321. Residues 326-345 form a disordered region; sequence LTSRQHFQQQRSISTDSRKS. Over residues 329-340 the composition is skewed to polar residues; sequence RQHFQQQRSIST. A helical transmembrane segment spans residues 390–410; sequence IFIWTQVIAALSVSLGSLVVG. The Extracellular segment spans residues 411–439; it reads FVSAYTSPALVSMSDPNITSFTVTKDAGS. Residue Asn-427 is glycosylated (N-linked (GlcNAc...) asparagine). The helical transmembrane segment at 440–460 threads the bilayer; it reads WVGGIMPLAGLVGGVAGGPLI. Residues 461 to 472 are Cytoplasmic-facing; it reads EYMGRRNTILAT. Residues 473–493 traverse the membrane as a helical segment; sequence AVPFIVSSLLIACAVNVAMVL. At 494–496 the chain is on the extracellular side; the sequence is CGR. The helical transmembrane segment at 497-517 threads the bilayer; that stretch reads FLAGFCVGIASLSLPVYLGET. Residues 518–527 are Cytoplasmic-facing; the sequence is VQPEVRGTLG. A helical transmembrane segment spans residues 528–548; sequence LLPTAFGNIGILVCFVAGSFM. The N-linked (GlcNAc...) asparagine glycan is linked to Asn-549. Residues 549–551 are Extracellular-facing; sequence NWS. The helical transmembrane segment at 552 to 572 threads the bilayer; the sequence is MLAFLGAALPVPFLILMFLIP. Residues 573 to 635 are Cytoplasmic-facing; sequence ETPRWYVSRG…ELLKRNNLKP (63 aa). The helical transmembrane segment at 636–656 threads the bilayer; the sequence is LSISLGLMFFQQFSGINAVIF. Residues 657 to 672 are Extracellular-facing; it reads YTVQIFKDAGSTIDGN. Residues 673–693 traverse the membrane as a helical segment; sequence VCTIIVGVVNFVATFIGILLI. Residues 694 to 699 are Cytoplasmic-facing; that stretch reads DRAGRK. Residues 700–720 form a helical membrane-spanning segment; that stretch reads ILLYASDIAMVLTLFVLGGFF. Residues 721–739 lie on the Extracellular side of the membrane; it reads YCKAHGPDVSHLGWLPLTC. A helical transmembrane segment spans residues 740-760; sequence FVVYILGFSVGFGPIPWLMMG. Topologically, residues 761–766 are cytoplasmic; that stretch reads EILPAK. The helical transmembrane segment at 767 to 787 threads the bilayer; sequence IRGAAASVATSFNWTCTFVVT. Residues 788–800 are Extracellular-facing; it reads KTFQDLVGSLGAH. The helical transmembrane segment at 801–821 threads the bilayer; the sequence is GAFWLFGAICFVGLFFVILYV. The Cytoplasmic portion of the chain corresponds to 822–856; that stretch reads PETQGKTLEDIERKMMGRVRRMSSVANIKPLSFNM. Phosphoserine is present on residues Ser-844 and Ser-845.

It belongs to the major facilitator superfamily. Sugar transporter (TC 2.A.1.1) family. Trehalose transporter subfamily.

The protein localises to the cell membrane. In terms of biological role, low-capacity facilitative transporter for trehalose. Does not transport maltose, sucrose or lactose. Mediates the bidirectional transfer of trehalose. Responsible for the transport of trehalose synthesized in the fat body and the incorporation of trehalose into other tissues that require a carbon source, thereby regulating trehalose levels in the hemolymph. This is Facilitated trehalose transporter Tret1 from Drosophila yakuba (Fruit fly).